A 562-amino-acid chain; its full sequence is Arginine--tRNA ligase (562 aa).

The 'HIGH' region motif lies at 122-132; sequence PNIAKPISMGH.

The protein belongs to the class-I aminoacyl-tRNA synthetase family. Monomer.

Its subcellular location is the cytoplasm. The enzyme catalyses tRNA(Arg) + L-arginine + ATP = L-arginyl-tRNA(Arg) + AMP + diphosphate. The polypeptide is Arginine--tRNA ligase (Pediococcus pentosaceus (strain ATCC 25745 / CCUG 21536 / LMG 10740 / 183-1w)).